The sequence spans 448 residues: MREFMQYVRNAFYGATGWSEDNSYKDLNVTARELIDFPLPRGIRLSLSSLATPHFATSYQLCNVGVVDGSISYLHSSVPLAAVPAQSNKIPLGALMRSYRGLHQLGSRGGTPWSWETGPQIGTIPQVPAVADMGQIPNKDKSSLLYGRLYLPQSLLEAMVIKRFSPALQVQISAVSEQSLRNGGTMLSVVQYDRGKYGVEGLYSTDGGLLGLRGLYNFGGDASVAVMSSQNGTGSPESTEKERIYGRFSAGGEMYYGTLNKSGGMSLGARFATLPTHKGTPLTATLTINPLMGNINTTYAVLAKDFLAMATRMEFNAYSYESDWAVGLELWSNRRPAGFLLGAEPSLDLESDQPELPSKKERSFQAKMEWRLDDPEPEPEPVKIAEKPTEGKEEYLGVFKARLSSNLDLGLVWEGRAKSLIFSLGTGVDLQRLGEPFRSLGLEVQYSS.

This sequence belongs to the MDM10 family. In terms of assembly, component of the ER-mitochondria encounter structure (ERMES) or MDM complex, composed of MMM1, MDM10, MDM12 and MDM34. Associates with the mitochondrial outer membrane sorting assembly machinery SAM(core) complex.

The protein localises to the mitochondrion outer membrane. Component of the ERMES/MDM complex, which serves as a molecular tether to connect the endoplasmic reticulum and mitochondria. Components of this complex are involved in the control of mitochondrial shape and protein biogenesis and may function in phospholipid exchange. MDM10 is involved in the late assembly steps of the general translocase of the mitochondrial outer membrane (TOM complex). Functions in the TOM40-specific route of the assembly of outer membrane beta-barrel proteins, including the association of TOM40 with the receptor TOM22 and small TOM proteins. Can associate with the SAM(core) complex as well as the MDM12-MMM1 complex, both involved in late steps of the major beta-barrel assembly pathway, that is responsible for biogenesis of all outer membrane beta-barrel proteins. May act as a switch that shuttles between both complexes and channels precursor proteins into the TOM40-specific pathway. Plays a role in mitochondrial morphology and in the inheritance of mitochondria. The sequence is that of Mitochondrial distribution and morphology protein 10 from Podospora anserina (strain S / ATCC MYA-4624 / DSM 980 / FGSC 10383) (Pleurage anserina).